The sequence spans 279 residues: Large ribosomal subunit protein uL24m (279 aa).

A mitochondrion-targeting transit peptide spans 1–31 (MRDLRKLIPRLRGPGTNVLKMKKPLPLHMRT). A compositionally biased stretch (basic and acidic residues) spans 34–51 (REHLNKSDPTVKDDKSAK). The interval 34-56 (REHLNKSDPTVKDDKSAKPELPF) is disordered. In terms of domain architecture, KOW spans 70–100 (KGDYVYVHQGPLKGKWGRVVETNKYTNGITI). The tract at residues 185–204 (PRPKTEDKPKDPEGKLDTKN) is disordered. Basic and acidic residues predominate over residues 187–202 (PKTEDKPKDPEGKLDT).

It belongs to the universal ribosomal protein uL24 family. As to quaternary structure, component of the mitochondrial large ribosomal subunit (mt-LSU). Mature yeast 74S mitochondrial ribosomes consist of a small (37S) and a large (54S) subunit. The 37S small subunit contains a 15S ribosomal RNA (15S mt-rRNA) and at least 32 different proteins. The 54S large subunit contains a 21S rRNA (21S mt-rRNA) and at least 45 different proteins. uL24m forms the wall of the exit tunnel.

The protein localises to the mitochondrion. Functionally, component of the mitochondrial ribosome (mitoribosome), a dedicated translation machinery responsible for the synthesis of mitochondrial genome-encoded proteins, including at least some of the essential transmembrane subunits of the mitochondrial respiratory chain. The mitoribosomes are attached to the mitochondrial inner membrane and translation products are cotranslationally integrated into the membrane. The protein is Large ribosomal subunit protein uL24m (mrpl40) of Schizosaccharomyces pombe (strain 972 / ATCC 24843) (Fission yeast).